The following is a 296-amino-acid chain: ATP synthase gamma chain (296 aa).

The protein belongs to the ATPase gamma chain family. F-type ATPases have 2 components, CF(1) - the catalytic core - and CF(0) - the membrane proton channel. CF(1) has five subunits: alpha(3), beta(3), gamma(1), delta(1), epsilon(1). CF(0) has three main subunits: a, b and c.

It localises to the cell inner membrane. Produces ATP from ADP in the presence of a proton gradient across the membrane. The gamma chain is believed to be important in regulating ATPase activity and the flow of protons through the CF(0) complex. The polypeptide is ATP synthase gamma chain (Rhodopirellula baltica (strain DSM 10527 / NCIMB 13988 / SH1)).